The following is a 324-amino-acid chain: Putative divalent cation/proton antiporter TMEM165 (324 aa).

A signal peptide spans 1 to 33 (MAAAAPGNGRASAPRLLLLFLVPLLWAPAAVRA). Topologically, residues 34-89 (GPDEDLSHRNKEPPAPAQQLQPQPVAVQGPEPARVEKIFTPAAPVHTNKEDPATQT) are lumenal. A compositionally biased stretch (basic and acidic residues) spans 35-45 (PDEDLSHRNKE). Residues 35–59 (PDEDLSHRNKEPPAPAQQLQPQPVA) are disordered. The segment covering 50-59 (AQQLQPQPVA) has biased composition (low complexity). Residues 90–110 (NLGFIHAFVAAISVIIVSELG) form a helical membrane-spanning segment. Topologically, residues 111-126 (DKTFFIAAIMAMRYNR) are cytoplasmic. The chain crosses the membrane as a helical span at residues 127–147 (LTVLAGAMLALGLMTCLSVLF). Residues 148-151 (GYAT) are Lumenal-facing. A helical transmembrane segment spans residues 152–172 (TVIPRVYTYYVSTVLFAIFGI). Topologically, residues 173–228 (RMLREGLKMSPDEGQEELEEVQAELKKKDEEFQRTKLLNGPGDVETGTSITVPQKK) are cytoplasmic. Residues 184-211 (DEGQEELEEVQAELKKKDEEFQRTKLLN) adopt a coiled-coil conformation. Residues 229 to 249 (WLHFISPIFVQALTLTFLAEW) form a helical membrane-spanning segment. Over 250 to 267 (GDRSQLTTIVLAAREDPY) the chain is Lumenal. A helical membrane pass occupies residues 268–288 (GVAVGGTVGHCLCTGLAVIGG). At 289 to 299 (RMIAQKISVRT) the chain is on the cytoplasmic side. Residues 300-320 (VTIIGGIVFLAFAFSALFISP) form a helical membrane-spanning segment. Residues 321-324 (DSGF) are Lumenal-facing.

It belongs to the GDT1 family. As to expression, ubiquitously expressed.

It localises to the golgi apparatus membrane. It catalyses the reaction Ca(2+)(in) + n H(+)(out) = Ca(2+)(out) + n H(+)(in). The enzyme catalyses Mn(2+)(in) + n H(+)(out) = Mn(2+)(out) + n H(+)(in). In terms of biological role, putative divalent cation:proton antiporter that exchanges calcium or manganese ions for protons across the Golgi membrane. Mediates the reversible transport of calcium or manganese to the Golgi lumen driven by the proton gradient and possibly the membrane potential generated by V-ATPase. Provides calcium or manganese cofactors to resident Golgi enzymes and contributes to the maintenance of an acidic luminal Golgi pH required for proper functioning of the secretory pathway. Promotes Ca(2+) storage within the Golgi lumen of the mammary epithelial cells to be then secreted into milk. The transport mechanism and stoichiometry remains to be elucidated. The chain is Putative divalent cation/proton antiporter TMEM165 from Homo sapiens (Human).